The following is a 332-amino-acid chain: 2,3-diketo-L-gulonate reductase (332 aa).

Catalysis depends on H44, which acts as the Proton donor. NAD(+)-binding positions include 168–174 (ITMVDMS), 224–225 (WK), and 304–306 (GHE).

This sequence belongs to the LDH2/MDH2 oxidoreductase family. DlgD subfamily. As to quaternary structure, homodimer.

Its subcellular location is the cytoplasm. It catalyses the reaction 3-dehydro-L-gulonate + NAD(+) = 2,3-dioxo-L-gulonate + NADH + H(+). It carries out the reaction 3-dehydro-L-gulonate + NADP(+) = 2,3-dioxo-L-gulonate + NADPH + H(+). Catalyzes the reduction of 2,3-diketo-L-gulonate in the presence of NADH, to form 3-keto-L-gulonate. The chain is 2,3-diketo-L-gulonate reductase from Escherichia coli O17:K52:H18 (strain UMN026 / ExPEC).